The primary structure comprises 435 residues: NADH-quinone oxidoreductase subunit D (435 aa).

The protein belongs to the complex I 49 kDa subunit family. In terms of assembly, NDH-1 is composed of 14 different subunits. Subunits NuoB, C, D, E, F, and G constitute the peripheral sector of the complex.

The protein resides in the cell inner membrane. The enzyme catalyses a quinone + NADH + 5 H(+)(in) = a quinol + NAD(+) + 4 H(+)(out). In terms of biological role, NDH-1 shuttles electrons from NADH, via FMN and iron-sulfur (Fe-S) centers, to quinones in the respiratory chain. The immediate electron acceptor for the enzyme in this species is believed to be ubiquinone. Couples the redox reaction to proton translocation (for every two electrons transferred, four hydrogen ions are translocated across the cytoplasmic membrane), and thus conserves the redox energy in a proton gradient. In Xanthomonas oryzae pv. oryzae (strain MAFF 311018), this protein is NADH-quinone oxidoreductase subunit D.